We begin with the raw amino-acid sequence, 72 residues long: Protein RALF-like 20 (72 aa).

Positions 1–27 (MVLSKKTIMQSFALMIILSIVMSTTEA) are cleaved as a signal peptide. 2 disulfide bridges follow: cysteine 43–cysteine 51 and cysteine 63–cysteine 69.

This sequence belongs to the plant rapid alkalinization factor (RALF) family.

It localises to the secreted. Its function is as follows. Cell signaling peptide that may regulate plant stress, growth, and development. Mediates a rapid alkalinization of extracellular space by mediating a transient increase in the cytoplasmic Ca(2+) concentration leading to a calcium-dependent signaling events through a cell surface receptor and a concomitant activation of some intracellular mitogen-activated protein kinases. This is Protein RALF-like 20 (RALFL20) from Arabidopsis thaliana (Mouse-ear cress).